Reading from the N-terminus, the 421-residue chain is ATP-dependent RNA helicase RhlB (421 aa).

The Q motif motif lies at 9 to 37 (QKFSDFALHPKVVEALEKKGFHNCTPIQA). The region spanning 40–219 (LPLTLAGRDV…FEQMNNAEYI (180 aa)) is the Helicase ATP-binding domain. Residue 53 to 60 (AQTGTGKT) coordinates ATP. The short motif at 165–168 (DEAD) is the DEAD box element. Residues 245 to 390 (RLLQTLIEEE…VSKYNPDALM (146 aa)) form the Helicase C-terminal domain. The tract at residues 392 to 421 (DLPKPLRLTRPRTGNGPRRTGAPRNRRRSG) is disordered. The segment covering 402–414 (PRTGNGPRRTGAP) has biased composition (low complexity).

Belongs to the DEAD box helicase family. RhlB subfamily. Component of the RNA degradosome, which is a multiprotein complex involved in RNA processing and mRNA degradation.

It is found in the cytoplasm. The catalysed reaction is ATP + H2O = ADP + phosphate + H(+). DEAD-box RNA helicase involved in RNA degradation. Has RNA-dependent ATPase activity and unwinds double-stranded RNA. The chain is ATP-dependent RNA helicase RhlB from Escherichia coli (strain SMS-3-5 / SECEC).